Here is a 166-residue protein sequence, read N- to C-terminus: MPEFLDIRPLTRSAFAPFGEVIEADPASMRLINGGTTERFHALAAAEAAGEGARVIINLFRGQPRSFPYDVDMMERHPFGSQSFSPISGRPFLVVVSEDEGGRPGKPQVFFARGDQGVNYRRNVWHHPLMALGQTSDFLVVDRDGLGNNLEEFFFETPFVIKEPAP.

It belongs to the ureidoglycolate lyase family. As to quaternary structure, homodimer. Ni(2+) serves as cofactor.

It carries out the reaction (S)-ureidoglycolate = urea + glyoxylate. Its pathway is nitrogen metabolism; (S)-allantoin degradation. Catalyzes the catabolism of the allantoin degradation intermediate (S)-ureidoglycolate, generating urea and glyoxylate. Involved in the utilization of allantoin as nitrogen source. The sequence is that of Ureidoglycolate lyase from Rhizobium etli (strain ATCC 51251 / DSM 11541 / JCM 21823 / NBRC 15573 / CFN 42).